Reading from the N-terminus, the 173-residue chain is Ribosome maturation factor RimM (173 aa).

The 73-residue stretch at 98 to 170 folds into the PRC barrel domain; the sequence is VGDMTWDSFI…SLTVSLPEGL (73 aa).

It belongs to the RimM family. As to quaternary structure, binds ribosomal protein uS19.

It localises to the cytoplasm. Functionally, an accessory protein needed during the final step in the assembly of 30S ribosomal subunit, possibly for assembly of the head region. Essential for efficient processing of 16S rRNA. May be needed both before and after RbfA during the maturation of 16S rRNA. It has affinity for free ribosomal 30S subunits but not for 70S ribosomes. The chain is Ribosome maturation factor RimM from Parabacteroides distasonis (strain ATCC 8503 / DSM 20701 / CIP 104284 / JCM 5825 / NCTC 11152).